Reading from the N-terminus, the 606-residue chain is Fructan 6-exohydrolase (606 aa).

An N-terminal signal peptide occupies residues 1–21 (MAPNNGSWLVLSISMMLLSHG). N-linked (GlcNAc...) asparagine glycosylation is present at Asn5. Asp70 is a catalytic residue. Residues Asn110, Asn164, Asn193, Asn237, and Asn346 are each glycosylated (N-linked (GlcNAc...) asparagine). A disulfide bridge connects residues Cys445 and Cys491. 4 N-linked (GlcNAc...) asparagine glycosylation sites follow: Asn564, Asn585, Asn590, and Asn593.

Belongs to the glycosyl hydrolase 32 family.

The enzyme catalyses Hydrolysis of terminal, non-reducing (2-&gt;6)-linked beta-D-fructofuranose residues in fructans.. Not inhibited by sucrose. Functionally, hydrolyzes levan-type beta-(2-&gt;6)-linked fructans to fructose, but not inulin-type beta-(2-&gt;1)-linked fructans. The sequence is that of Fructan 6-exohydrolase from Beta vulgaris (Sugar beet).